A 243-amino-acid polypeptide reads, in one-letter code: Orotidine 5'-phosphate decarboxylase (243 aa).

Substrate is bound by residues Asp-18, Lys-39, 66 to 75 (DLKFHDIPAT), Thr-130, Arg-192, Gln-201, Gly-221, and Arg-222. The Proton donor role is filled by Lys-68.

The protein belongs to the OMP decarboxylase family. Type 1 subfamily. As to quaternary structure, homodimer.

The enzyme catalyses orotidine 5'-phosphate + H(+) = UMP + CO2. Its pathway is pyrimidine metabolism; UMP biosynthesis via de novo pathway; UMP from orotate: step 2/2. In terms of biological role, catalyzes the decarboxylation of orotidine 5'-monophosphate (OMP) to uridine 5'-monophosphate (UMP). The chain is Orotidine 5'-phosphate decarboxylase from Synechococcus sp. (strain CC9902).